Reading from the N-terminus, the 124-residue chain is Small ribosomal subunit protein bS6 (124 aa).

The disordered stretch occupies residues 98 to 124; that stretch reads EASPMLKAREERPRREDVREEAEEAAE. Basic and acidic residues predominate over residues 104 to 115; the sequence is KAREERPRREDV.

This sequence belongs to the bacterial ribosomal protein bS6 family.

Functionally, binds together with bS18 to 16S ribosomal RNA. This Tolumonas auensis (strain DSM 9187 / NBRC 110442 / TA 4) protein is Small ribosomal subunit protein bS6.